A 907-amino-acid chain; its full sequence is Collagen alpha-2(I) chain (907 aa).

Disordered regions lie at residues 1–183 (GPMG…GIPG) and 199–907 (IPGP…PGPS). Over residues 19–33 (AGEDGHPGKPGRERG) the composition is skewed to basic and acidic residues. Composition is skewed to low complexity over residues 101–130 (VGAPGPAGARGSDGSVGPVGPAGPIGSAGP), 155–169 (AGPRGEVGIPGVSGP), and 206–221 (PGPVGAAGATGARGIV). Asn-260 is subject to Deamidated asparagine. The residue at position 272 (Pro-272) is a 4-hydroxyproline. Low complexity-rich tracts occupy residues 272–281 (PGIRGSRGIP), 292–307 (PPGSRGASGPAGVRGP), 340–362 (PAGIPGIDGRPGPAGPAGARGEP), 424–441 (PGESGAAGPAGPIGSRGP), 453–475 (EPGVVGAPGTAGPSGPSGIPGER), 495–507 (APGAVGAPGPAGA), 535–555 (VGPAGPNGFAGPAGAAGQPGA), and 566–581 (NGPVGPTGPVGSAGPA). The segment covering 591–600 (GSRGDGGPPG) has biased composition (gly residues). Composition is skewed to low complexity over residues 601-611 (ATGFPGAAGRT), 664-691 (EAGTAGAPGIPGPQGIIGAPGIIGIPGS), 706-745 (EPGPIGIAGPPGARGPPGAVGSPGVNGAPGEAGRDGNPGN), 756-766 (NSGPVGAAGAP), and 783-804 (EPGPVGSVGPAGAVGPRGPSGP). Over residues 808-819 (RGDKGEPGDKGP) the composition is skewed to basic and acidic residues. Positions 892-907 (AGPPGPPGPPGPPGPS) are enriched in pro residues.

This sequence belongs to the fibrillar collagen family. In terms of assembly, trimers of one alpha 2(I) and two alpha 1(I) chains. Interacts (via C-terminus) with TMEM131 (via PapD-L domain); the interaction is direct and is involved in assembly and TRAPPIII ER-to-Golgi transport complex-dependent secretion of collagen. In terms of processing, prolines at the third position of the tripeptide repeating unit (G-X-Y) are hydroxylated in some or all of the chains. As to expression, forms the fibrils of tendon, ligaments and bones. In bones, the fibrils are mineralized with calcium hydroxyapatite.

It is found in the secreted. The protein resides in the extracellular space. Its subcellular location is the extracellular matrix. Functionally, type I collagen is a member of group I collagen (fibrillar forming collagen). This Macrauchenia sp protein is Collagen alpha-2(I) chain.